We begin with the raw amino-acid sequence, 1437 residues long: Envelopment polyprotein (1437 aa).

Positions 1 to 21 (MAISTSLLIVALLIKLCLVNT) are cleaved as a signal peptide. The Lumenal portion of the chain corresponds to 22 to 207 (APPISKCFQD…GYMASSICQN (186 aa)). N-linked (GlcNAc...) asparagine; by host glycosylation is found at Asn-65 and Asn-88. A helical transmembrane segment spans residues 208–228 (IELIIIIILTLAIFIFMCIIT). Residues 229–312 (RTYICYLMLP…RVARSLCKSK (84 aa)) are Cytoplasmic-facing. A helical transmembrane segment spans residues 313-333 (GSSLVISILTAMLILSFITPL). The Lumenal segment spans residues 334–373 (EAMTTNYPDDKKFTLKEVNDIVLGRDMEQELKSSILILMS). The helical transmembrane segment at 374–394 (ICGIGIILIFFGLTVLLEIVL) threads the bilayer. Topologically, residues 395-460 (ELIAKRSTIF…TYYIKIRNLK (66 aa)) are cytoplasmic. The chain crosses the membrane as a helical span at residues 461–481 (LIMLIFSIVILMQNATMLVVA). Topologically, residues 482–1391 (GENCWTNTEI…EPLNNFFGNY (910 aa)) are lumenal. N-linked (GlcNAc...) asparagine; by host glycosylation is found at Asn-627 and Asn-1173. A helical transmembrane segment spans residues 1392-1412 (LNMFLYILGGIILLFLALYIL). Residues 1413-1437 (MPMCARLRDELKRNERLHQMEMKKR) are Cytoplasmic-facing.

The protein belongs to the orthobunyavirus envelope glycoprotein family. As to quaternary structure, glycoprotein C and Glycoprotein N interact with each other. In terms of processing, specific enzymatic cleavages in vivo yield mature proteins including nonstructural protein NSm, Glycoprotein C, and Glycoprotein N.

It is found in the virion membrane. It localises to the host Golgi apparatus membrane. The protein localises to the host endoplasmic reticulum membrane. In terms of biological role, glycoprotein C and Glycoprotein N interact with each other and are present at the surface of the virion. They are able to attach the virion to a cell receptor and to promote fusion of membranes after endocytosis of the virion. The polypeptide is Envelopment polyprotein (GP) (Culex).